The sequence spans 805 residues: Leucine--tRNA ligase (805 aa).

The 'HIGH' region signature appears at 40–51 (PYPSGQGLHVGH). The 'KMSKS' region motif lies at 577 to 581 (KMSKS). Lysine 580 provides a ligand contact to ATP.

It belongs to the class-I aminoacyl-tRNA synthetase family.

The protein resides in the cytoplasm. The catalysed reaction is tRNA(Leu) + L-leucine + ATP = L-leucyl-tRNA(Leu) + AMP + diphosphate. This Pediococcus pentosaceus (strain ATCC 25745 / CCUG 21536 / LMG 10740 / 183-1w) protein is Leucine--tRNA ligase.